Here is a 172-residue protein sequence, read N- to C-terminus: Translation initiation factor IF-3 (172 aa).

It belongs to the IF-3 family. As to quaternary structure, monomer.

It is found in the cytoplasm. Its function is as follows. IF-3 binds to the 30S ribosomal subunit and shifts the equilibrium between 70S ribosomes and their 50S and 30S subunits in favor of the free subunits, thus enhancing the availability of 30S subunits on which protein synthesis initiation begins. This chain is Translation initiation factor IF-3, found in Campylobacter concisus (strain 13826).